Consider the following 431-residue polypeptide: Serine--tRNA ligase (431 aa).

235–237 (TSE) is an L-serine binding site. 266 to 268 (RSE) serves as a coordination point for ATP. Glu289 contacts L-serine. Residue 353–356 (EISS) coordinates ATP. Ser388 is an L-serine binding site.

This sequence belongs to the class-II aminoacyl-tRNA synthetase family. Type-1 seryl-tRNA synthetase subfamily. In terms of assembly, homodimer. The tRNA molecule binds across the dimer.

It is found in the cytoplasm. It carries out the reaction tRNA(Ser) + L-serine + ATP = L-seryl-tRNA(Ser) + AMP + diphosphate + H(+). It catalyses the reaction tRNA(Sec) + L-serine + ATP = L-seryl-tRNA(Sec) + AMP + diphosphate + H(+). It participates in aminoacyl-tRNA biosynthesis; selenocysteinyl-tRNA(Sec) biosynthesis; L-seryl-tRNA(Sec) from L-serine and tRNA(Sec): step 1/1. Functionally, catalyzes the attachment of serine to tRNA(Ser). Is also able to aminoacylate tRNA(Sec) with serine, to form the misacylated tRNA L-seryl-tRNA(Sec), which will be further converted into selenocysteinyl-tRNA(Sec). The polypeptide is Serine--tRNA ligase (Paraburkholderia phytofirmans (strain DSM 17436 / LMG 22146 / PsJN) (Burkholderia phytofirmans)).